A 334-amino-acid polypeptide reads, in one-letter code: Endoplasmic reticulum junction formation protein lunapark (334 aa).

The Cytoplasmic portion of the chain corresponds to 1–40 (MGWFFQKKKEFDFGGELDRLEMKLEEAQYNIDNIQSQKKK). Residues 12 to 42 (DFGGELDRLEMKLEEAQYNIDNIQSQKKKIL) adopt a coiled-coil conformation. Residues 41 to 61 (ILFRYTVCSLAIYTIGMAVWA) form a helical membrane-spanning segment. Residues 62–78 (SRSSILFQHPLFSKLFR) lie on the Lumenal side of the membrane. The helical transmembrane segment at 79 to 99 (ISLYILGVFSLYMFRWAIAWF) threads the bilayer. Residues 99 to 127 (FCEKRLSRARMNLHKLNAEKRKILDALKS) adopt a coiled-coil conformation. Topologically, residues 100-334 (CEKRLSRARM…SVPESLTPTK (235 aa)) are cytoplasmic. A C4-type; plays a role in ER morphology zinc finger spans residues 201–227 (CSHCFHHNGLASYGEKASDVRYVCLFC). A disordered region spans residues 237 to 315 (KSLPSSEMDS…SSPDASYNSV (79 aa)). A compositionally biased stretch (polar residues) spans 239 to 252 (LPSSEMDSNLQTNP). Low complexity predominate over residues 253–270 (SSISKGKKNNSNNTTQKG). Positions 273-283 (IISSPQVINAS) are enriched in polar residues. The residue at position 284 (Ser284) is a Phosphoserine. Residues 297-315 (ALPTSPLSSSSPDASYNSV) show a composition bias toward low complexity.

It belongs to the lunapark family.

Its subcellular location is the endoplasmic reticulum membrane. The protein localises to the golgi apparatus membrane. Plays a role in tubular endoplasmic reticulum network formation and maintenance. The protein is Endoplasmic reticulum junction formation protein lunapark (lnp1) of Schizosaccharomyces pombe (strain 972 / ATCC 24843) (Fission yeast).